The primary structure comprises 269 residues: Cytochrome c oxidase subunit 3 (269 aa).

Helical transmembrane passes span P21 to M41, I45 to W65, G90 to F110, P138 to I160, A167 to I187, F205 to I225, and V247 to W267.

Belongs to the cytochrome c oxidase subunit 3 family. As to quaternary structure, component of the cytochrome c oxidase (complex IV, CIV), a multisubunit enzyme composed of a catalytic core of 3 subunits and several supernumerary subunits. The complex exists as a monomer or a dimer and forms supercomplexes (SCs) in the inner mitochondrial membrane with ubiquinol-cytochrome c oxidoreductase (cytochrome b-c1 complex, complex III, CIII).

The protein localises to the mitochondrion inner membrane. It carries out the reaction 4 Fe(II)-[cytochrome c] + O2 + 8 H(+)(in) = 4 Fe(III)-[cytochrome c] + 2 H2O + 4 H(+)(out). Functionally, component of the cytochrome c oxidase, the last enzyme in the mitochondrial electron transport chain which drives oxidative phosphorylation. The respiratory chain contains 3 multisubunit complexes succinate dehydrogenase (complex II, CII), ubiquinol-cytochrome c oxidoreductase (cytochrome b-c1 complex, complex III, CIII) and cytochrome c oxidase (complex IV, CIV), that cooperate to transfer electrons derived from NADH and succinate to molecular oxygen, creating an electrochemical gradient over the inner membrane that drives transmembrane transport and the ATP synthase. Cytochrome c oxidase is the component of the respiratory chain that catalyzes the reduction of oxygen to water. Electrons originating from reduced cytochrome c in the intermembrane space (IMS) are transferred via the dinuclear copper A center (CU(A)) of subunit 2 and heme A of subunit 1 to the active site in subunit 1, a binuclear center (BNC) formed by heme A3 and copper B (CU(B)). The BNC reduces molecular oxygen to 2 water molecules using 4 electrons from cytochrome c in the IMS and 4 protons from the mitochondrial matrix. The sequence is that of Cytochrome c oxidase subunit 3 (COX3) from Lachancea kluyveri (strain ATCC 58438 / CBS 3082 / BCRC 21498 / NBRC 1685 / JCM 7257 / NCYC 543 / NRRL Y-12651) (Yeast).